Here is a 447-residue protein sequence, read N- to C-terminus: Probable aspartic protease At2g35615 (447 aa).

The signal sequence occupies residues 1–20 (MATQILLCFFLFFSVTLSSS). The N-linked (GlcNAc...) asparagine glycan is linked to asparagine 25. A Peptidase A1 domain is found at 85–439 (FFMSITIGTP…DLETRTVSFQ (355 aa)). Residue aspartate 103 is part of the active site. Asparagine 251 is a glycosylation site (N-linked (GlcNAc...) asparagine). The active site involves aspartate 326.

It belongs to the peptidase A1 family.

It localises to the secreted. The sequence is that of Probable aspartic protease At2g35615 from Arabidopsis thaliana (Mouse-ear cress).